The primary structure comprises 278 residues: Chitosanase (278 aa).

A signal peptide spans 1 to 41 (MRLKHPTARLALAALLVAVPRSVAAAGTVHAAPAPAGATRL). Glu-63 (proton donor) is an active-site residue. The active-site Nucleophile is Asp-81.

It belongs to the glycosyl hydrolase 46 family.

Its subcellular location is the secreted. The enzyme catalyses Endohydrolysis of beta-(1-&gt;4)-linkages between D-glucosamine residues in a partly acetylated chitosan.. In terms of biological role, aids in the defense against invading fungal pathogens by degrading their cell wall chitosan. This is Chitosanase (csn) from Nocardioides sp. (strain N106).